Reading from the N-terminus, the 399-residue chain is Dual-specificity RNA methyltransferase RlmN (399 aa).

The active-site Proton acceptor is E116. The Radical SAM core domain maps to 122-352 (SEDRLTLCIS…VLLRRSMGRD (231 aa)). The cysteines at positions 129 and 357 are disulfide-linked. [4Fe-4S] cluster is bound by residues C136, C140, and C143. S-adenosyl-L-methionine-binding positions include 185–186 (GE), S217, 238–240 (SLN), and N314. C357 functions as the S-methylcysteine intermediate in the catalytic mechanism.

It belongs to the radical SAM superfamily. RlmN family. It depends on [4Fe-4S] cluster as a cofactor.

It localises to the cytoplasm. It carries out the reaction adenosine(2503) in 23S rRNA + 2 reduced [2Fe-2S]-[ferredoxin] + 2 S-adenosyl-L-methionine = 2-methyladenosine(2503) in 23S rRNA + 5'-deoxyadenosine + L-methionine + 2 oxidized [2Fe-2S]-[ferredoxin] + S-adenosyl-L-homocysteine. The enzyme catalyses adenosine(37) in tRNA + 2 reduced [2Fe-2S]-[ferredoxin] + 2 S-adenosyl-L-methionine = 2-methyladenosine(37) in tRNA + 5'-deoxyadenosine + L-methionine + 2 oxidized [2Fe-2S]-[ferredoxin] + S-adenosyl-L-homocysteine. Functionally, specifically methylates position 2 of adenine 2503 in 23S rRNA and position 2 of adenine 37 in tRNAs. m2A2503 modification seems to play a crucial role in the proofreading step occurring at the peptidyl transferase center and thus would serve to optimize ribosomal fidelity. The polypeptide is Dual-specificity RNA methyltransferase RlmN (Bdellovibrio bacteriovorus (strain ATCC 15356 / DSM 50701 / NCIMB 9529 / HD100)).